Reading from the N-terminus, the 754-residue chain is Phosphatase and actin regulator 4B (754 aa).

Residues 1 to 12 (MENRDDEVEHQH) show a composition bias toward basic and acidic residues. Disordered stretches follow at residues 1–38 (MENR…FSTL), 83–105 (KELP…KNGH), 120–625 (VHSP…SKEQ), and 637–666 (LTRR…DRQA). Residues 61-86 (EVLERKMSMRRPRQELIEQGVLKELP) form an RPEL 1 repeat. 3 stretches are compositionally biased toward basic and acidic residues: residues 138–153 (PEDR…DHRG), 184–221 (HGED…EPDW), and 229–241 (SSVE…RESD). Low complexity-rich tracts occupy residues 296-307 (SFCSSNSSSSSS) and 316-333 (SSAG…LTTS). Composition is skewed to pro residues over residues 348 to 357 (KQPPMPPPKP), 381 to 390 (KPSPPMPPKR), 427 to 445 (LPPP…PSPP), and 460 to 478 (YPLP…PPED). Acidic residues-rich tracts occupy residues 483–503 (DEDD…DEEP), 541–557 (SEEE…ESDS), and 566–576 (DESDEDEEDDS). Over residues 605–615 (QAPERQAKSEH) the composition is skewed to basic and acidic residues. RPEL repeat units follow at residues 635 to 660 (TALT…QPKN) and 673 to 698 (RRLT…RFHE). The residue at position 642 (serine 642) is a Phosphoserine.

It belongs to the phosphatase and actin regulator family. As to quaternary structure, binds ppp1ca and actin.

It localises to the cytoplasm. Its subcellular location is the cell projection. The protein resides in the lamellipodium. Regulator of protein phosphatase 1 (PP1) required for neural tube and optic fissure closure, and enteric neural crest cell (ENCCs) migration during development. Acts as an activator of PP1. During neural tube closure, localizes to the ventral neural tube and activates PP1, leading to down-regulate cell proliferation within cranial neural tissue and the neural retina. Also acts as a regulator of migration of enteric neural crest cells (ENCCs) by activating PP1, leading to repression of the integrin signaling through the rho/rock pathway. The polypeptide is Phosphatase and actin regulator 4B (phactr4b) (Danio rerio (Zebrafish)).